Consider the following 428-residue polypeptide: Citrate synthase (428 aa).

Active-site residues include His-265, His-306, and Asp-363.

This sequence belongs to the citrate synthase family. As to quaternary structure, homohexamer.

It carries out the reaction oxaloacetate + acetyl-CoA + H2O = citrate + CoA + H(+). Its pathway is carbohydrate metabolism; tricarboxylic acid cycle; isocitrate from oxaloacetate: step 1/2. Allosterically inhibited by NADH. This is Citrate synthase (gltA) from Pseudomonas aeruginosa (strain ATCC 15692 / DSM 22644 / CIP 104116 / JCM 14847 / LMG 12228 / 1C / PRS 101 / PAO1).